The sequence spans 269 residues: Small ribosomal subunit protein uS2 (269 aa).

It belongs to the universal ribosomal protein uS2 family.

The sequence is that of Small ribosomal subunit protein uS2 (rpsB) from Synechocystis sp. (strain ATCC 27184 / PCC 6803 / Kazusa).